The following is a 486-amino-acid chain: Glutamyl-tRNA(Gln) amidotransferase subunit A (486 aa).

Catalysis depends on charge relay system residues Lys77 and Ser152. Catalysis depends on Ser176, which acts as the Acyl-ester intermediate.

Belongs to the amidase family. GatA subfamily. Heterotrimer of A, B and C subunits.

It carries out the reaction L-glutamyl-tRNA(Gln) + L-glutamine + ATP + H2O = L-glutaminyl-tRNA(Gln) + L-glutamate + ADP + phosphate + H(+). In terms of biological role, allows the formation of correctly charged Gln-tRNA(Gln) through the transamidation of misacylated Glu-tRNA(Gln) in organisms which lack glutaminyl-tRNA synthetase. The reaction takes place in the presence of glutamine and ATP through an activated gamma-phospho-Glu-tRNA(Gln). This chain is Glutamyl-tRNA(Gln) amidotransferase subunit A, found in Lactococcus lactis subsp. cremoris (strain SK11).